The sequence spans 348 residues: MRIEEDLKLGFKDVLIRPKRSTLKSRSDVELAREYRFKHSGWQWSGVPLIAANMDTVGTFSMARVLAGFDVLTAVHKHYSVEQWQSFVSSVGEETLRHVMVSTGTSEADFIKLRQILALSPSLKFICIDVANGYSEHFVDFLRRARDVCPDKVICAGNVVTGEMVEELILSGADIVKVGIGPGSVCTTRVKTGVGYPQLSAVIECADAAHGLGGQIVSDGGCTMPGDVAKAFGGGADFVMLGGMLAAHAECEGRIVEEQGRKMMLFYGMSSASAMNRHVGGVADYRAAEGKTVSLPLRGPVENTVRDILGGLRSACTYVGASRLKELTKRTTFIRVAEQENRVFGRAD.

108–131 (ADFIKLRQILALSPSLKFICIDVA) lines the NADP(+) pocket. K(+) is bound by residues Gly-181 and Gly-183. Cys-186 serves as the catalytic Thioimidate intermediate. 216-239 (IVSDGGCTMPGDVAKAFGGGADFV) is an NADP(+) binding site.

It belongs to the IMPDH/GMPR family. GuaC type 1 subfamily. In terms of assembly, homotetramer.

The catalysed reaction is IMP + NH4(+) + NADP(+) = GMP + NADPH + 2 H(+). Catalyzes the irreversible NADPH-dependent deamination of GMP to IMP. It functions in the conversion of nucleobase, nucleoside and nucleotide derivatives of G to A nucleotides, and in maintaining the intracellular balance of A and G nucleotides. The sequence is that of GMP reductase from Edwardsiella ictaluri (strain 93-146).